The chain runs to 190 residues: MAPDGSIARPTVLTGPSGVGKGTLVARLRERHPEIWLSVSATTRAPRSGEIDGIHYFFHSKERFNKLVQSGGLLEWAEFAGNCYGTPREPVSERVANGIPVLLEIELEGARQVRKSLPEAIQIFLAPPSVEELEKRIRGRGTEAEEAIQRRLKRAQEELEAQTEFDAVIVNDDLETALAELEKQMNLTIS.

Residues 8–186 (ARPTVLTGPS…ALAELEKQMN (179 aa)) enclose the Guanylate kinase-like domain. 15-22 (GPSGVGKG) contributes to the ATP binding site.

The protein belongs to the guanylate kinase family.

It localises to the cytoplasm. The enzyme catalyses GMP + ATP = GDP + ADP. It carries out the reaction dZMP + ATP = dZDP + ADP. The protein operates within purine metabolism. Essential for recycling GMP and indirectly, cGMP. Functionally, (Microbial infection) Catalyzes the phosphorylation of dZMP to dZDP, when the bacterium is infected by a phage that produces the substrate for the synthesis of dZTP (2- amino-2'-deoxyadenosine 5'-triphosphate), which is then used by the phage as a DNA polymerase substrate. This Synechococcus sp. (strain CC9311) protein is Guanylate kinase.